A 211-amino-acid chain; its full sequence is Uridine kinase (211 aa).

13 to 20 (GGSGSGKT) serves as a coordination point for ATP.

It belongs to the uridine kinase family.

Its subcellular location is the cytoplasm. It catalyses the reaction uridine + ATP = UMP + ADP + H(+). The enzyme catalyses cytidine + ATP = CMP + ADP + H(+). It functions in the pathway pyrimidine metabolism; CTP biosynthesis via salvage pathway; CTP from cytidine: step 1/3. It participates in pyrimidine metabolism; UMP biosynthesis via salvage pathway; UMP from uridine: step 1/1. The protein is Uridine kinase of Lactobacillus johnsonii (strain CNCM I-12250 / La1 / NCC 533).